Consider the following 252-residue polypeptide: Carbohydrate deacetylase (252 aa).

Residues His59 and His122 each coordinate Mg(2+).

This sequence belongs to the YdjC deacetylase family. As to quaternary structure, homodimer. The cofactor is Mg(2+).

In terms of biological role, probably catalyzes the deacetylation of acetylated carbohydrates an important step in the degradation of oligosaccharides. The chain is Carbohydrate deacetylase from Vibrio vulnificus (strain CMCP6).